Here is a 359-residue protein sequence, read N- to C-terminus: Putative ankyrin repeat protein R190 (359 aa).

ANK repeat units lie at residues 72–103 (RLMEIYHKMIIIDNNMDLLDLLFEIMSDDFRC), 105–133 (DCVILDLAIRHQRTDVFNKYIILGFDLNR), 142–173 (DEIILWYHQIKKYDTGIELCDYLIDNGASISI), 203–234 (LGNLLFWYLRNYYNVNIDIVETILSNGIDINN), 236–260 (HEYSYMLIGKFNVPIMNLFIRYGLI), 261–287 (IHDDVIDDACRYGNHLLVDYLMEIGHK), and 288–317 (PSKQIITNVIENHNVNIIKLFVKYNIDLSD).

This is Putative ankyrin repeat protein R190 from Acanthamoeba polyphaga (Amoeba).